We begin with the raw amino-acid sequence, 39 residues long: Small basic protein 1 (39 aa).

Position 1 is a pyrrolidone carboxylic acid (Gln-1). 3 cysteine pairs are disulfide-bonded: Cys-6–Cys-32, Cys-10–Cys-26, and Cys-14–Cys-31.

It is found in the secreted. The sequence is that of Small basic protein 1 from Anas platyrhynchos (Mallard).